The chain runs to 392 residues: Quinolinate synthase (392 aa).

A disordered region spans residues 1 to 23; sequence MVDLPTTTPPAQPTTGNDEVDAL. Residues H57 and S74 each contribute to the iminosuccinate site. Residue C131 participates in [4Fe-4S] cluster binding. Iminosuccinate contacts are provided by residues 163–165 and S184; that span reads YIN. C254 contacts [4Fe-4S] cluster. Residues 280–282 and T297 contribute to the iminosuccinate site; that span reads HPE. C344 is a binding site for [4Fe-4S] cluster.

It belongs to the quinolinate synthase family. Type 3 subfamily. [4Fe-4S] cluster serves as cofactor.

It is found in the cytoplasm. The catalysed reaction is iminosuccinate + dihydroxyacetone phosphate = quinolinate + phosphate + 2 H2O + H(+). Its pathway is cofactor biosynthesis; NAD(+) biosynthesis; quinolinate from iminoaspartate: step 1/1. Catalyzes the condensation of iminoaspartate with dihydroxyacetone phosphate to form quinolinate. This Rhodopirellula baltica (strain DSM 10527 / NCIMB 13988 / SH1) protein is Quinolinate synthase.